The sequence spans 69 residues: Large ribosomal subunit protein uL30 (69 aa).

This sequence belongs to the universal ribosomal protein uL30 family. Part of the 50S ribosomal subunit.

The sequence is that of Large ribosomal subunit protein uL30 from Rhizobium etli (strain CIAT 652).